The primary structure comprises 411 residues: Mannan endo-1,4-beta-mannosidase 1 (411 aa).

An N-terminal signal peptide occupies residues methionine 1 to glycine 17. Residue asparagine 33 is glycosylated (N-linked (GlcNAc...) asparagine). 2 residues coordinate substrate: tryptophan 87 and asparagine 197. Glutamate 198 functions as the Proton donor in the catalytic mechanism. Asparagine 202 is a glycosylation site (N-linked (GlcNAc...) asparagine). Tyrosine 277 lines the substrate pocket. The active-site Nucleophile is the glutamate 319. A substrate-binding site is contributed by tryptophan 361. Residues asparagine 366 and asparagine 384 are each glycosylated (N-linked (GlcNAc...) asparagine).

Belongs to the glycosyl hydrolase 5 (cellulase A) family. In terms of tissue distribution, expressed in roots, stems and flowers.

The protein resides in the secreted. It catalyses the reaction Random hydrolysis of (1-&gt;4)-beta-D-mannosidic linkages in mannans, galactomannans and glucomannans.. The chain is Mannan endo-1,4-beta-mannosidase 1 (MAN1) from Arabidopsis thaliana (Mouse-ear cress).